The chain runs to 688 residues: Sodium channel and clathrin linker 1 (688 aa).

Ala-2 is modified (N-acetylalanine). The stretch at 69–673 (ELNGQLKYYQ…SASQQLSVIT (605 aa)) forms a coiled coil. Residue Ser-681 is modified to Phosphoserine.

In terms of assembly, interacts with SCN10A and clathrin. Identified in a complex containing SCN10A, clathrin and SCLT1.

The protein localises to the cytoplasm. The protein resides in the cytoskeleton. It localises to the microtubule organizing center. It is found in the centrosome. Its subcellular location is the centriole. Its function is as follows. Adapter protein that links SCN10A to clathrin. Regulates SCN10A channel activity, possibly by promoting channel internalization. This chain is Sodium channel and clathrin linker 1 (SCLT1), found in Homo sapiens (Human).